Here is a 167-residue protein sequence, read N- to C-terminus: Mannose-specific lectin (167 aa).

Residues 1–24 (MAFSISSTMIFLLSLALFSTLVSA) form the signal peptide. The 114-residue stretch at 25–138 (DNHLLPGERL…PIFATGTNRF (114 aa)) folds into the Bulb-type lectin domain. Cysteine 53 and cysteine 76 are disulfide-bonded.

Homotetramer. As to expression, expressed in the pseudobulb, with highest levels of expression in the non-swollen internode (at protein level).

It localises to the secreted. Mannose-specific lectin. Shows agglutinating activity towards chicken erythrocytes. Has antifungal activity against A.alternata and Collectotrichum species. The sequence is that of Mannose-specific lectin from Dendrobium findlayanum (Findlay's orchid).